The following is a 532-amino-acid chain: E3 ubiquitin-protein ligase MGRN1 (532 aa).

Residue glycine 2 is the site of N-myristoyl glycine attachment. An RING-type zinc finger spans residues 277–316 (ECVVCLSDLRDTLILPCRHLCLCTSCADTLRYQANNCPIC). The Required for TSG101-binding motif lies at 384 to 387 (PSAP). A Phosphotyrosine modification is found at tyrosine 389. Residues 419–518 (LQKGKTQSKS…QPVPPADIYL (100 aa)) form a disordered region. Polar residues predominate over residues 422–435 (GKTQSKSPDSTLRS). Phosphoserine occurs at positions 428, 449, 452, and 501. Over residues 442 to 453 (EEDEEKLSEDSD) the composition is skewed to acidic residues.

In terms of assembly, interacts with MC1R and MC4R. Interacts with TSG101. Interacts with mislocalized cytosolically exposed PRNP; this interaction alters MGRN1 subcellular location and causes lysosomal enlargement. Autoubiquitinated in vitro. As to expression, widely expressed, with highest levels in brain, heart, kidney and liver. In the CNS, especially prominent in the Purkinje cells of the cerebellum. In the skin, expressed in the basal layer of the epidermis and hair follicles, primarily in the outer root sheath. Isoforms 1, 3, 4 and 5 are equally expressed in the liver. Isoforms 1, 3 and 4 are most abundant in brain, kidney and heart, respectively.

Its subcellular location is the early endosome. The protein resides in the cytoplasm. It is found in the cell membrane. It localises to the nucleus. It catalyses the reaction S-ubiquitinyl-[E2 ubiquitin-conjugating enzyme]-L-cysteine + [acceptor protein]-L-lysine = [E2 ubiquitin-conjugating enzyme]-L-cysteine + N(6)-ubiquitinyl-[acceptor protein]-L-lysine.. Its pathway is protein modification; protein ubiquitination. E3 ubiquitin-protein ligase. Mediates TSG101 monoubiquitination at multiple sites. Plays a role in the regulation of endosome-to-lysosome trafficking. Impairs MC1R- and MC4R-signaling by competing with GNAS-binding to MCRs and inhibiting agonist-induced cAMP production. Does not inhibit ADRB2-signaling. Does not promote MC1R ubiquitination. Also acts as a negative regulator of hedgehog signaling. In Mus musculus (Mouse), this protein is E3 ubiquitin-protein ligase MGRN1 (Mgrn1).